A 134-amino-acid chain; its full sequence is Ribonuclease P protein component 2 (134 aa).

The protein belongs to the eukaryotic/archaeal RNase P protein component 2 family. As to quaternary structure, consists of a catalytic RNA component and at least 4-5 protein subunits. Forms a subcomplex with Rnp3 which stimulates the catalytic RNA.

The protein localises to the cytoplasm. It catalyses the reaction Endonucleolytic cleavage of RNA, removing 5'-extranucleotides from tRNA precursor.. In terms of biological role, part of ribonuclease P, a protein complex that generates mature tRNA molecules by cleaving their 5'-ends. The sequence is that of Ribonuclease P protein component 2 from Methanocaldococcus jannaschii (strain ATCC 43067 / DSM 2661 / JAL-1 / JCM 10045 / NBRC 100440) (Methanococcus jannaschii).